The sequence spans 357 residues: Homoserine O-acetyltransferase (357 aa).

One can recognise an AB hydrolase-1 domain in the interval 51–340 (NVIVICHALT…EPYGHDAFLI (290 aa)). The Nucleophile role is filled by S147. R216 contacts substrate. Active-site residues include D306 and H335. D336 contributes to the substrate binding site.

It belongs to the AB hydrolase superfamily. MetX family. Homodimer.

It is found in the cytoplasm. It carries out the reaction L-homoserine + acetyl-CoA = O-acetyl-L-homoserine + CoA. It functions in the pathway amino-acid biosynthesis; L-methionine biosynthesis via de novo pathway; O-acetyl-L-homoserine from L-homoserine: step 1/1. In terms of biological role, transfers an acetyl group from acetyl-CoA to L-homoserine, forming acetyl-L-homoserine. In Chlorobium chlorochromatii (strain CaD3), this protein is Homoserine O-acetyltransferase.